The sequence spans 207 residues: Thymidylate kinase (207 aa).

Residue 10 to 17 (GIEGSGKS) coordinates ATP.

This sequence belongs to the thymidylate kinase family.

It catalyses the reaction dTMP + ATP = dTDP + ADP. In terms of biological role, phosphorylation of dTMP to form dTDP in both de novo and salvage pathways of dTTP synthesis. The polypeptide is Thymidylate kinase (Halothermothrix orenii (strain H 168 / OCM 544 / DSM 9562)).